We begin with the raw amino-acid sequence, 315 residues long: Acetyl-coenzyme A carboxylase carboxyl transferase subunit alpha (315 aa).

Residues 32-289 (EIDLLEASLE…KQAFVDQLEQ (258 aa)) form the CoA carboxyltransferase C-terminal domain.

This sequence belongs to the AccA family. Acetyl-CoA carboxylase is a heterohexamer composed of biotin carboxyl carrier protein (AccB), biotin carboxylase (AccC) and two subunits each of ACCase subunit alpha (AccA) and ACCase subunit beta (AccD).

It localises to the cytoplasm. It catalyses the reaction N(6)-carboxybiotinyl-L-lysyl-[protein] + acetyl-CoA = N(6)-biotinyl-L-lysyl-[protein] + malonyl-CoA. The protein operates within lipid metabolism; malonyl-CoA biosynthesis; malonyl-CoA from acetyl-CoA: step 1/1. In terms of biological role, component of the acetyl coenzyme A carboxylase (ACC) complex. First, biotin carboxylase catalyzes the carboxylation of biotin on its carrier protein (BCCP) and then the CO(2) group is transferred by the carboxyltransferase to acetyl-CoA to form malonyl-CoA. The chain is Acetyl-coenzyme A carboxylase carboxyl transferase subunit alpha from Staphylococcus haemolyticus (strain JCSC1435).